The following is a 239-amino-acid chain: 7-cyano-7-deazaguanine synthase (239 aa).

8–18 (LSGGLDSPTVL) provides a ligand contact to ATP. Cys188, Cys196, Cys199, and Cys202 together coordinate Zn(2+).

The protein belongs to the QueC family. Zn(2+) serves as cofactor.

It catalyses the reaction 7-carboxy-7-deazaguanine + NH4(+) + ATP = 7-cyano-7-deazaguanine + ADP + phosphate + H2O + H(+). Its pathway is purine metabolism; 7-cyano-7-deazaguanine biosynthesis. In terms of biological role, catalyzes the ATP-dependent conversion of 7-carboxy-7-deazaguanine (CDG) to 7-cyano-7-deazaguanine (preQ(0)). This Picrophilus torridus (strain ATCC 700027 / DSM 9790 / JCM 10055 / NBRC 100828 / KAW 2/3) protein is 7-cyano-7-deazaguanine synthase.